The primary structure comprises 624 residues: Plastin-2 (624 aa).

EF-hand domains follow at residues 9 to 44 (EEMEELREAFTKVDVDGNGHISTDELNALFKAANLP) and 49 to 84 (RVREIIQEISRTMDLNQDGKITFDEFAKVVHDLKSS). Residues Asp22, Asp24, Asn26, His28, Glu33, Asp62, Asn64, Asp66, Lys68, and Glu73 each contribute to the Ca(2+) site. 4 Calponin-homology (CH) domains span residues 118–234 (EEEK…KIGL), 262–373 (LSPE…NKYP), 392–501 (TREE…RRYT), and 513–621 (KIID…ARGM). Actin-binding regions lie at residues 118–373 (EEEK…NKYP) and 392–621 (TREE…ARGM).

In terms of assembly, monomer. Expressed by macrophages (at protein level).

It is found in the cytoplasm. It localises to the cytoskeleton. The protein localises to the cell junction. The protein resides in the cell projection. Its subcellular location is the ruffle membrane. Actin-binding protein. Plays a role in the activation of T-cells. This is Plastin-2 from Danio rerio (Zebrafish).